The sequence spans 3902 residues: MDTPLSSSEISPRFSNTVPSSVSSMTPNADPSVIVGLACRVPGATNPSQLWENIVAQKDLQRKMPADRFNVDAFYHPDGTNKGTTNAKFGYFLDQDIGMFDAGFFRISGKEAEAMDPQQRLLLEVVYEALEDAGITLDEVNGSNTAVFCGSFTNDYNAMVTKDLEYYPKYTVTGTGNAILSNRISYFYNLHGPSVTIDTACSSSLNESDIAIVVGSALHFDPNVFITMTDLGMLSSDGRCRTFDSMGSGYVRGEGICAAVLKRRRDAVYNGDNIRAVVRASGVNHDGIKQGITLPNTNAQEKLIRRTYDLAGLDPNDTQYFEAHGTGTARGDPIEARAIGAVFGSTRSEPLYVGSVKSNIGHLEGASGLAGIIKATLALEESQIPPNMHFKRPNPEIKFDEWKIQVPQDIISWPASANGIRRASINSFGYGGTNAHVILDAYKPEDSEAELQAIPAISSSIPVDRPYLIPLSAHSTKAGALWEDKLTKYLSNEPIGRPAVSDLAVSLSTRRTMHGNRSFIIGKDMPTVLQGLEQPPSPAAAWTRPLKETPRLGFVFTGQGAQWFAMGRKLIQQSHLYRQTLERCDAVLQSLPDGPDWTVLEELLRTEEASRLKETRLSQPICTAMQLATVCLLKQWGIEPSAVVGHSSGEVAAAYAAGILTFENAMIAAYYRGLYMSSGVDGSMTTDGAMMAVGLTEAEAKKEFETYTGQICVAAVNSASSLTLSGDKDAIVRLRDSLVERKIFARLLQVAQAFHSHHMLPLAPKYEEALKNCAGFGTSPARVRMFSSVTARLARPGEMGAGYWTANMTGTVRFSDALTGILLNEEDEQNVDILVEIGPHPALKGPSRQVMNALKLNLPYLASLTRGVNDYESLLTLAGQLFQYGFPVDLIAVNSDHFLQRETGMIQSELHGKRLRDLPTYAWDHKRYWSETRPIREHRLRKQRHSILGARMPGIPERTPHWRNYLRLKEIPWLADHVIDGNAVFPAAGYFSMAIEAAVSMCAEDSVIKEIALRDLNVQSALLLSDSEEGTEVIMELRPATQSAKSKSALWYEFTIYSYGESKILNEHCSGLVSVETNALTLPMRWESSKTFDDLAKESQESIPAETLYDHLTALGLQYGPSFQLLTGDVQTGPGFALAGLDFQPSQFSVQAADLTIAHPTLLDASFHAIFPAIESALGRSLDEPLVPTFVRSFKVSGDFLACCRESREQKFQVTCFTRLPGPRVALSDLTVCSKESNKPLLQFNGLEVTALGSDKTDNSAGRSLFFRTRWQPAFTFLGPDHPAVAQKNISEILDIFAHQFPDTRILHVSDTVDGTRDVLKYLGGRSNERRRFHSITPVFQTQIALEEIDALSQEWPGLVEISEPEPNAYGLVVLSSDAADLDSRQFVKEGGFVLALGPHPQPEGLHDVFFTKDLAVWQKSTDNAQKPKQLSLILPSCPSQRTLDIADGMEMQHGSSVFVTRTSLAALSNEALQAEDIVVLANLDEDVLFEHSSSDQSTFLGIKRLLTAGGKNIVWVLEGGSMDAPKPEHAMIIGLARVARSENDQLRFVTLDLPRASTQETVVRHVWRLLDRSITEDEVAVRDNCIFIPRVEADDQLNSKLRNGTNSQPREEPLGAGRPLALKIGRVGLLETLVFEDDEQILDTQLADDEIEIEVKASAINFRDIAASMGIIDDYKLGDECAGIVTRIGAQVNPQDFQVGDRVAAWRPGQGAHKTIVRNPASLSYKLGDMSFVDAASLPCILTTAYYSLVHVAHLQPGETVLIHSAAGGVGQMAIQVAQYVGARVIATVGSQAKRSLLKSRYGLADDMIFNSRDDSFVRDVLDTTGGRGVDVILNSLAGKLLHATWSCVAPFGRFIEIGKRDIHENSKIDMDPFRRNVAFASVDLVTIFEKNKPLGARLLKECGTLVHKGHITPPETVTELPYSDAVKAFRLLQMGKHTGKVVLVPHAGDRVPVLPSTYRNQPLFKHEKTYLLVGGLGGLGRTLAEWMVRKNARRLAFLSRSGADKEEAKRTVEWLRERGVSVTVFKGDVSRYEDVERAVKAIDNLGGIFQAAMVLQDAPLENMSYQQWQICVEPKVKGTYNLHQATLGKQLDFFICFSSASGSIGSKGQANYSSANCYLDALMRHRREMGLAGTTMNCGMIVGIGAVAANQALLKVMMRSGYDGVNKEELLYQIEEAVLSDNNKKVSRRGVDLHQTITGINMTKADFYWCQKPLYRNLYNNHEFLGQTAIKQGTKSLASQLQGTKSVEERTTLVLSAFIEKVADVLSVSVDSIESANPLSAYGLDSIIAVEFRKWFSRSVGVEIALFDVLGAPSIFALVTKASGLITITTSNDDKAENVDNEGAKGNEDQEVETQQGQLNQPIPPAAAVGPVPMSSFQQRLWFIHNFGDDKTFLNLSITSYLEGNPDATILEKALNELVNRNAILRTGYTEGDEFAEQTVLDMPSISLERIDVSSKPSPTVSLQDVIQRRRAIELEIEEGEVVRPMLVRLSDDQHALVLICHHIAIDRGSAKSSLNQLTGIYDAIRQGRDLDMVPRPGVSYADFAVWHNRLLSSPSLQADLTFWKENLSGMPKTCKLLPFAKSERPLHDDLQRTVVSGILKKSLLNRMKRICSQSGATPFQFLLAAFRAFIFRYTEDSDLGILMIDGDRPHPDLEDVLGFFVNMTPIRCQDSCEGAFDQLLEATKTRTLEAMSHSKAPFDSIVDVVKAKKTTSHFPLAQIALNYQIHGTFPVYRTQDFNVHDVQSVDVPTACDMQLEALEHPERGLDLRLEYSSTLYGSGDMNRFFDNFVTFMSSLIRDHRQPIAEVNLCGALEIAHLEKNFWNTQFTQNPWGSVGVCQRIMENAAKQPEAVAIAASDGAAITYSELVERAQRVAASLKASGVTERQKICVLVDPGVDAVIALLAVLLTRSCYVALDSSFAVDRLAFMASDCGAGVLLFGPELQGLAETVASKSKSGLRLLDTKKAALCEDRFVGDLPSVNEDPFFIIYTSGSTGKPKGVVLSHANTQQMLASVGEYFRFTSDDRFLQQSSLCFDLSVVQIFSALTAGARVCVAKHDIRKDPAALAAFMHETGVTITYFTPTHFALLLEHSWETLHQCSQYRAALFAGERLPVRIARAFYDLQTPAVVYNTWSPSELVVQTTIHKVDKPDDDVFDIPIGRPLPNCRHYVVDAVLNPLPAGFVGEICVGGAQVGLEYLNRPLANATSFVRDLNSTPEDQARGWKKMFRTGDKGSFLPNGLLTFKGRIAGDKQIKLRGFRIDLGEVEQVLYKNASTPDGQGIVDISVIARDSEKSDATSPLTDERRLIAFVIPKKPLQSTQERDEYANYLHRMAQGSLNEYMCPNGYQFLERLPMTIGGKVDRRSLLTMKLDLAQHTTTCTDSRPVTEVAGDDAEILQGVTGQVCSLLGIDRSIAPNDNFFELGGQSILLLRLQSRLKKKFKVTLKLQELIHAPTPLAIAGMIQKQLKGPAGVQNENASKSIDWSEEISLPASLMNTDYSQLSRFPRTDVSSILLTGIDTFIGLHMLATILSNNHNATVYVIGIHDELTADHLVEGLTKYKLLDAHLSTEDVLSRTCAVPGKMTSPRFGLAEEAFRNLADKVRVIFNIAADVSLLKTYVDLKTVNTSAILTLIELATSSHGHLLEIHHLSTWSVPHLQTWKKTSRTRAFASNREEDPSHFTPPTADEYGYFKSRWAAEMYLTQAAARGVPVSIYRASSVSGSRATNVPVPEMDFISNMIMHMIQHRAIPEINSSSLIDEAGDFVVDFLPVDALTSSMYTLASEESAAAPGLQVYHLGSSQPLPLQALVDVIPSLDQSGAAGKCRVVPMQEWLRLVSEGASEEEQLHWMVVKKYFQHGHSMFALDKSHTVAALKKAGKEVEFPAIDVDYLKRLLDERGPGLKR.

The disordered stretch occupies residues 1-25 (MDTPLSSSEISPRFSNTVPSSVSSM). In terms of domain architecture, Ketosynthase family 3 (KS3) spans 29-441 (ADPSVIVGLA…GTNAHVILDA (413 aa)). Active-site for beta-ketoacyl synthase activity residues include Cys-201, His-324, and His-362. The segment at 555-868 (VFTGQGAQWF…PYLASLTRGV (314 aa)) is malonyl-CoA:ACP transacylase (MAT) domain. Ser-647 (for malonyltransferase activity) is an active-site residue. Residues 945 to 1080 (HSILGARMPG…GLVSVETNAL (136 aa)) form an N-terminal hotdog fold region. Positions 945–1256 (HSILGARMPG…LEVTALGSDK (312 aa)) are dehydratase (DH) domain. The 314-residue stretch at 945–1258 (HSILGARMPG…VTALGSDKTD (314 aa)) folds into the PKS/mFAS DH domain. His-977 functions as the Proton acceptor; for dehydratase activity in the catalytic mechanism. Residues 1100–1258 (QESIPAETLY…VTALGSDKTD (159 aa)) form a C-terminal hotdog fold region. Residue Asp-1164 is the Proton donor; for dehydratase activity of the active site. The segment at 1629 to 1945 (GLLETLVFED…MGKHTGKVVL (317 aa)) is enoyl reductase (ER) domain. Residues 1971 to 2143 (TYLLVGGLGG…AGTTMNCGMI (173 aa)) form a ketoreductase (KR) domain region. The 78-residue stretch at 2251–2328 (ERTTLVLSAF…ALVTKASGLI (78 aa)) folds into the Carrier 1 domain. O-(pantetheine 4'-phosphoryl)serine is present on Ser-2288. Basic and acidic residues predominate over residues 2337 to 2350 (KAENVDNEGAKGNE). A disordered region spans residues 2337-2364 (KAENVDNEGAKGNEDQEVETQQGQLNQP). The interval 2374-2816 (VPMSSFQQRL…AEVNLCGALE (443 aa)) is condensation (C) domain 7. The interval 2836–3248 (SVGVCQRIME…NGLLTFKGRI (413 aa)) is adenylation (A) domain 8. One can recognise a Carrier 2 domain in the interval 3391–3467 (GDDAEILQGV…AIAGMIQKQL (77 aa)). Ser-3427 is modified (O-(pantetheine 4'-phosphoryl)serine). The interval 3515–3774 (LTGIDTFIGL…VDFLPVDALT (260 aa)) is thioesterase (TE) domain.

The protein in the C-terminal section; belongs to the NRP synthetase family.

It participates in secondary metabolite biosynthesis. Functionally, hybrid PKS-NRPS synthetase; part of the gene cluster that mediates the biosynthesis of pyranonigrins, a family of antioxidative compounds. The first step of pyranonigrins biosynthesis is performed by the hybrid PKS-NRPS synthetase that condenses 6 malonyl-CoA units to an acetyl starter unit, to form a 1,3,5-trioxotetradecane-6,8-dienyl-ACP. The enoyl reductase (ER) domain of pynA is likely to be functional during the first two rounds of polyketide chain extension, to generate the saturated C-C bonds of the alkyl side chain. PynA subsequently forms the amide bond between the acyl chain and L-serine. Although pynA has a terminal reductase domain, it appears to require the thioesterase pynI for the release of the straight-chain intermediate from pynA via the formation of a tetramic acid pyranonigrin J. The methyltransferase pynC then coverts pyranonigrin J to pyranonigrin I via N-methylation. The FAD-dependent monooxygenase pynG catalyzes an epoxidation-mediated cyclization to form the dihydro-gamma-pyrone moiety, followed by pynD-catalyzed oxidation of the alcohol to the ketone and enolization to yield the characteristic tetramic acid-fused gamma-pyrone core of pyranonigrin H. Pyranonigrin H is substrate of pynH for dehydration-mediated exo-methylene formation from the serine side chain to produce pyranonigrin E, before the oxidase pynE reduces the exo-methylene of pyranonigrin E into a pendant methyl to form pyranonigrin G. The FAD-linked oxidoreductase pynB performs the reverse reaction and converts pyranonigrin G back to pyranonigrin E. This is Hybrid PKS-NRPS synthetase pynA from Aspergillus niger (strain ATCC MYA-4892 / CBS 513.88 / FGSC A1513).